Here is a 583-residue protein sequence, read N- to C-terminus: Putative amidase C869.01 (583 aa).

Positions 1–19 are cleaved as a signal peptide; it reads MKLQLLFLTLAQLAKHGLA. Catalysis depends on charge relay system residues K141 and S222. The active-site Acyl-ester intermediate is S246.

This sequence belongs to the amidase family.

It is found in the cytoplasm. The enzyme catalyses a monocarboxylic acid amide + H2O = a monocarboxylate + NH4(+). This is Putative amidase C869.01 from Schizosaccharomyces pombe (strain 972 / ATCC 24843) (Fission yeast).